A 192-amino-acid polypeptide reads, in one-letter code: Small ribosomal subunit protein uS4c-2 (192 aa).

The S4 RNA-binding domain occupies 91–155 (TRLDHLVYRA…PKPPEYLPPY (65 aa)).

It belongs to the universal ribosomal protein uS4 family. As to quaternary structure, part of the 30S ribosomal subunit. Contacts protein S5. The interaction surface between S4 and S5 is involved in control of translational fidelity.

The protein resides in the plastid. It localises to the chloroplast. One of the primary rRNA binding proteins, it binds directly to 16S rRNA where it nucleates assembly of the body of the 30S subunit. In terms of biological role, with S5 and S12 plays an important role in translational accuracy. The chain is Small ribosomal subunit protein uS4c-2 from Cyanidium caldarium (Red alga).